Here is a 487-residue protein sequence, read N- to C-terminus: Histamine H1 receptor (487 aa).

Residues 1–29 (MSLPNSSCLLEDKMCEGNKTTMASPQLMP) are Extracellular-facing. N-linked (GlcNAc...) asparagine glycans are attached at residues Asn5 and Asn18. Residues 30–50 (LVVVLSTISLVTVGLNLLVLY) traverse the membrane as a helical segment. The Cytoplasmic segment spans residues 51-64 (AVRSERKLHTVGNL). A helical transmembrane segment spans residues 65–89 (YIVSLSVADLIVGAVVMPMNILYLL). Over 90 to 97 (MSKWSLGR) the chain is Extracellular. The helical transmembrane segment at 98–123 (PLCLFWLSMDYVASTASIFSVFILCI) threads the bilayer. Cys100 and Cys180 form a disulfide bridge. Residues Asp107 and Thr112 each contribute to the histamine site. The segment at 107 to 112 (DYVAST) is important for agonist binding. Over 124 to 144 (DRYRSVQQPLRYLKYRTKTRA) the chain is Cytoplasmic. 2 positions are modified to phosphothreonine: Thr140 and Thr142. The chain crosses the membrane as a helical span at residues 145–164 (SATILGAWFLSFLWVIPILG). Residues 165 to 188 (WNHFRQQISVRREDKCETDFYDVT) are Extracellular-facing. The helical transmembrane segment at 189–211 (WFKVMTAIINFYLPTLLMLWFYA) threads the bilayer. Residue Asn198 participates in histamine binding. The Cytoplasmic segment spans residues 212 to 416 (KIYKAVQKHC…MNRERKAAKQ (205 aa)). A Phosphoserine modification is found at Ser230. Residues 238 to 261 (KLRPENPKGDAKKPGKESPWEVLK) are compositionally biased toward basic and acidic residues. The tract at residues 238–286 (KLRPENPKGDAKKPGKESPWEVLKRKPKDAGGGSVLKSPSQTPKEMKSP) is disordered. Thr279 carries the post-translational modification Phosphothreonine. Phosphoserine occurs at positions 344 and 347. Positions 345 to 379 (EISEDQMLGDSQSFSRTDSDTTTETAPGKGKLRSG) are disordered. Residues 353 to 369 (GDSQSFSRTDSDTTTET) show a composition bias toward polar residues. Ser380, Ser396, and Ser398 each carry phosphoserine. A helical membrane pass occupies residues 417–440 (LGFIMAAFILCWIPYFIFFMVIAF). Positions 424 to 428 (FILCW) are important for agonist binding. Tyr431 provides a ligand contact to histamine. A disulfide bridge connects residues Cys441 and Cys444. Over 441–446 (CKNCCN) the chain is Extracellular. Residues 447-469 (EHLHMFTIWLGYINSTLNPLIYP) form a helical membrane-spanning segment. At 470 to 487 (LCNENFKKTFKRILHIRS) the chain is on the cytoplasmic side.

This sequence belongs to the G-protein coupled receptor 1 family. Post-translationally, phosphorylation at sites in the second and third cytoplasmic loops independently contribute to agonist-induced receptor down-regulation.

It is found in the cell membrane. G-protein-coupled receptor for histamine, a biogenic amine that functions as an immune modulator and a neurotransmitter. Through the H1 receptor, histamine mediates the contraction of smooth muscles and increases capillary permeability due to contraction of terminal venules. Also mediates neurotransmission in the central nervous system and thereby regulates circadian rhythms, emotional and locomotor activities as well as cognitive functions. The protein is Histamine H1 receptor of Pongo pygmaeus (Bornean orangutan).